The sequence spans 349 residues: Succinylglutamate desuccinylase (349 aa).

Zn(2+) contacts are provided by His70, Glu73, and His166. Glu229 is a catalytic residue.

Belongs to the AspA/AstE family. Succinylglutamate desuccinylase subfamily. The cofactor is Zn(2+).

The catalysed reaction is N-succinyl-L-glutamate + H2O = L-glutamate + succinate. Its pathway is amino-acid degradation; L-arginine degradation via AST pathway; L-glutamate and succinate from L-arginine: step 5/5. Its function is as follows. Transforms N(2)-succinylglutamate into succinate and glutamate. This chain is Succinylglutamate desuccinylase, found in Burkholderia mallei (strain ATCC 23344).